We begin with the raw amino-acid sequence, 139 residues long: uncharacterized protein (139 aa).

2 consecutive transmembrane segments (helical) span residues 71-91 (LFSALLMYIVQLFTLLVATLL) and 97-117 (ENELIRAILIFMLTALSFVMV).

This sequence belongs to the RseC family.

The protein resides in the cell inner membrane. This is an uncharacterized protein from Haemophilus influenzae (strain ATCC 51907 / DSM 11121 / KW20 / Rd).